The following is a 53-amino-acid chain: uncharacterized protein (53 aa).

The protein belongs to the ELIP/psbS family.

The protein resides in the plastid. The protein localises to the chloroplast. Functionally, possible role in chlorophyll and/or carotenoid binding. This is an uncharacterized protein from Guillardia theta (Cryptophyte).